The sequence spans 367 residues: Probable butyrate kinase (367 aa).

This sequence belongs to the acetokinase family.

It is found in the cytoplasm. It carries out the reaction butanoate + ATP = butanoyl phosphate + ADP. This Bacillus anthracis (strain A0248) protein is Probable butyrate kinase.